The following is a 363-amino-acid chain: 3-isopropylmalate dehydrogenase (363 aa).

An NAD(+)-binding site is contributed by 79–92 (GPKWEHLPPNDQPE). Arginine 100, arginine 110, arginine 139, and aspartate 228 together coordinate substrate. Positions 228, 252, and 256 each coordinate Mg(2+). 286–298 (GSAPDIAGKNIAN) serves as a coordination point for NAD(+).

This sequence belongs to the isocitrate and isopropylmalate dehydrogenases family. LeuB type 1 subfamily. As to quaternary structure, homodimer. Requires Mg(2+) as cofactor. Mn(2+) is required as a cofactor.

It localises to the cytoplasm. It carries out the reaction (2R,3S)-3-isopropylmalate + NAD(+) = 4-methyl-2-oxopentanoate + CO2 + NADH. The protein operates within amino-acid biosynthesis; L-leucine biosynthesis; L-leucine from 3-methyl-2-oxobutanoate: step 3/4. Functionally, catalyzes the oxidation of 3-carboxy-2-hydroxy-4-methylpentanoate (3-isopropylmalate) to 3-carboxy-4-methyl-2-oxopentanoate. The product decarboxylates to 4-methyl-2 oxopentanoate. In Vibrio parahaemolyticus serotype O3:K6 (strain RIMD 2210633), this protein is 3-isopropylmalate dehydrogenase.